The sequence spans 225 residues: Thymidylate kinase (225 aa).

10 to 17 lines the ATP pocket; the sequence is GIDGAGKS.

Belongs to the thymidylate kinase family.

It carries out the reaction dTMP + ATP = dTDP + ADP. Its function is as follows. Phosphorylation of dTMP to form dTDP in both de novo and salvage pathways of dTTP synthesis. In Polaromonas sp. (strain JS666 / ATCC BAA-500), this protein is Thymidylate kinase.